Here is a 514-residue protein sequence, read N- to C-terminus: Probable endopolygalacturonase D (514 aa).

Residues 1–16 form the signal peptide; sequence MKRCALLTPLLPLALA. The interval 134-166 is disordered; sequence IKSSSPGPSSSFAAAATTEAPTSTRASPYTPYT. A compositionally biased stretch (low complexity) spans 136–166; sequence SSSPGPSSSFAAAATTEAPTSTRASPYTPYT. C173 and C188 are oxidised to a cystine. An N-linked (GlcNAc...) asparagine glycan is attached at N240. PbH1 repeat units follow at residues 280 to 302, 303 to 341, 342 to 363, 364 to 384, 393 to 414, 422 to 444, and 456 to 500; these read VYNSVVANLNIQNWPVHCFDIEN, TESLTLTGITLDNSAGDEPNDSSDGDPAAHNSDGFDIKS, STDLILKDSNVYNQDDCVAITS, GTNITVDNMYCSGGHGLSIGS, VDGVVFSNSQVVNSQNGCRIKT, VSNIKYENISLSGISKYGIVVQQ, and SNGV…SITG. Residues 312 to 335 form a disordered region; it reads TLDNSAGDEPNDSSDGDPAAHNSD. N-linked (GlcNAc...) asparagine glycosylation is present at N322. D356 functions as the Proton donor in the catalytic mechanism. The cysteines at positions 358 and 374 are disulfide-linked. Residue N366 is glycosylated (N-linked (GlcNAc...) asparagine). H378 is a catalytic residue. A glycan (N-linked (GlcNAc...) asparagine) is linked at N429. C483 and C488 are oxidised to a cystine. Residue N490 is glycosylated (N-linked (GlcNAc...) asparagine). Residues C506 and C513 are joined by a disulfide bond.

The protein belongs to the glycosyl hydrolase 28 family.

It is found in the secreted. The enzyme catalyses (1,4-alpha-D-galacturonosyl)n+m + H2O = (1,4-alpha-D-galacturonosyl)n + (1,4-alpha-D-galacturonosyl)m.. In terms of biological role, involved in maceration and soft-rotting of plant tissue. Hydrolyzes the 1,4-alpha glycosidic bonds of de-esterified pectate in the smooth region of the plant cell wall. This chain is Probable endopolygalacturonase D (pgaD), found in Emericella nidulans (strain FGSC A4 / ATCC 38163 / CBS 112.46 / NRRL 194 / M139) (Aspergillus nidulans).